The chain runs to 89 residues: Small ribosomal subunit protein uS15 (89 aa).

The protein belongs to the universal ribosomal protein uS15 family. In terms of assembly, part of the 30S ribosomal subunit. Forms a bridge to the 50S subunit in the 70S ribosome, contacting the 23S rRNA.

In terms of biological role, one of the primary rRNA binding proteins, it binds directly to 16S rRNA where it helps nucleate assembly of the platform of the 30S subunit by binding and bridging several RNA helices of the 16S rRNA. Its function is as follows. Forms an intersubunit bridge (bridge B4) with the 23S rRNA of the 50S subunit in the ribosome. The sequence is that of Small ribosomal subunit protein uS15 from Cereibacter sphaeroides (strain ATCC 17025 / ATH 2.4.3) (Rhodobacter sphaeroides).